The chain runs to 69 residues: ATP synthase F(0) complex subunit 8 (69 aa).

Residues 8-24 traverse the membrane as a helical segment; the sequence is TWLLTITLMILALFCIY. Lys55 carries the N6-acetyllysine; alternate modification. The residue at position 55 (Lys55) is an N6-succinyllysine; alternate. N6-acetyllysine is present on Lys58.

The protein belongs to the ATPase protein 8 family. As to quaternary structure, component of the ATP synthase complex composed at least of ATP5F1A/subunit alpha, ATP5F1B/subunit beta, ATP5MC1/subunit c (homooctomer), MT-ATP6/subunit a, MT-ATP8/subunit 8, ATP5ME/subunit e, ATP5MF/subunit f, ATP5MG/subunit g, ATP5MK/subunit k, ATP5MJ/subunit j, ATP5F1C/subunit gamma, ATP5F1D/subunit delta, ATP5F1E/subunit epsilon, ATP5PF/subunit F6, ATP5PB/subunit b, ATP5PD/subunit d, ATP5PO/subunit OSCP. ATP synthase complex consists of a soluble F(1) head domain (subunits alpha(3) and beta(3)) - the catalytic core - and a membrane F(0) domain - the membrane proton channel (subunits c, a, 8, e, f, g, k and j). These two domains are linked by a central stalk (subunits gamma, delta, and epsilon) rotating inside the F1 region and a stationary peripheral stalk (subunits F6, b, d, and OSCP). Interacts with PRICKLE3.

The protein resides in the mitochondrion membrane. Functionally, subunit 8, of the mitochondrial membrane ATP synthase complex (F(1)F(0) ATP synthase or Complex V) that produces ATP from ADP in the presence of a proton gradient across the membrane which is generated by electron transport complexes of the respiratory chain. ATP synthase complex consist of a soluble F(1) head domain - the catalytic core - and a membrane F(1) domain - the membrane proton channel. These two domains are linked by a central stalk rotating inside the F(1) region and a stationary peripheral stalk. During catalysis, ATP synthesis in the catalytic domain of F(1) is coupled via a rotary mechanism of the central stalk subunits to proton translocation. In vivo, can only synthesize ATP although its ATP hydrolase activity can be activated artificially in vitro. Part of the complex F(0) domain. In Osphranter robustus (Wallaroo), this protein is ATP synthase F(0) complex subunit 8.